Reading from the N-terminus, the 346-residue chain is Annexin A1 (346 aa).

N-acetylalanine is present on Ala-2. Residue Ser-5 is modified to Phosphoserine; by TRPM7. Gln-19 is covalently cross-linked (Isoglutamyl lysine isopeptide (Gln-Lys) (interchain with K-?)). Tyr-21 carries the post-translational modification Phosphotyrosine; by EGFR. Ser-27 is modified (phosphoserine; by PKC). Phosphoserine is present on residues Ser-34 and Ser-37. Annexin repeat units follow at residues 42-113 (FNPS…AMLK), 114-185 (TPAQ…ALAK), 197-269 (DLAD…TIVK), and 273-344 (STPA…ALCG). At Lys-58 the chain carries N6-acetyllysine. Residues Gly-59, Val-60, Glu-62, Lys-97, Leu-100, Glu-105, Met-127, Gly-129, Gly-131, Thr-132, and Glu-134 each coordinate Ca(2+). The residue at position 136 (Thr-136) is a Phosphothreonine. Ca(2+) is bound by residues Asp-171, Gly-210, and Arg-213. A Glycyl lysine isopeptide (Lys-Gly) (interchain with G-Cter in SUMO1); alternate cross-link involves residue Lys-214. Lys-214 is covalently cross-linked (Glycyl lysine isopeptide (Lys-Gly) (interchain with G-Cter in SUMO2); alternate). Ca(2+)-binding residues include Gly-215, Asp-253, Glu-255, and Leu-256. Lys-257 participates in a covalent cross-link: Glycyl lysine isopeptide (Lys-Gly) (interchain with G-Cter in SUMO1). Ca(2+) is bound by residues Glu-261, Met-286, Gly-288, and Gly-290. An N6-acetyllysine modification is found at Lys-312. An intrachain disulfide couples Cys-324 to Cys-343. Residues Leu-328, Glu-330, and Thr-331 each coordinate Ca(2+). Lys-332 is covalently cross-linked (Glycyl lysine isopeptide (Lys-Gly) (interchain with G-Cter in SUMO1)). Glu-336 is a binding site for Ca(2+).

This sequence belongs to the annexin family. As to quaternary structure, homodimer; non-covalently linked. Homodimer; linked by transglutamylation. Homodimers linked by transglutamylation are observed in placenta, but not in other tissues. Interacts with S100A11. Heterotetramer, formed by two molecules each of S100A11 and ANXA1. Interacts with DYSF. Interacts with EGFR. Phosphorylated by protein kinase C, EGFR and TRPM7. Phosphorylated in response to EGF treatment. Post-translationally, sumoylated. In terms of processing, proteolytically cleaved by cathepsin CTSG to release the active N-terminal peptide Ac2-26. Detected in eosinophils. Detected in lung, placenta, spleen and thymus (at protein level).

Its subcellular location is the nucleus. The protein localises to the cytoplasm. It localises to the cell projection. It is found in the cilium. The protein resides in the basolateral cell membrane. Its subcellular location is the lateral cell membrane. The protein localises to the cell membrane. It localises to the apical cell membrane. It is found in the membrane. The protein resides in the endosome membrane. Its subcellular location is the secreted. The protein localises to the extracellular space. It localises to the early endosome. It is found in the cytoplasmic vesicle membrane. The protein resides in the extracellular exosome. Its subcellular location is the cytoplasmic vesicle. The protein localises to the secretory vesicle lumen. It localises to the phagocytic cup. In terms of biological role, plays important roles in the innate immune response as effector of glucocorticoid-mediated responses and regulator of the inflammatory process. Has anti-inflammatory activity. Plays a role in glucocorticoid-mediated down-regulation of the early phase of the inflammatory response. Contributes to the adaptive immune response by enhancing signaling cascades that are triggered by T-cell activation, regulates differentiation and proliferation of activated T-cells. Promotes the differentiation of T-cells into Th1 cells and negatively regulates differentiation into Th2 cells. Has no effect on unstimulated T-cells. Negatively regulates hormone exocytosis via activation of the formyl peptide receptors and reorganization of the actin cytoskeleton. Has high affinity for Ca(2+) and can bind up to eight Ca(2+) ions. Displays Ca(2+)-dependent binding to phospholipid membranes. Plays a role in the formation of phagocytic cups and phagosomes. Plays a role in phagocytosis by mediating the Ca(2+)-dependent interaction between phagosomes and the actin cytoskeleton. Functionally, functions at least in part by activating the formyl peptide receptors and downstream signaling cascades. Promotes chemotaxis of granulocytes and monocytes via activation of the formyl peptide receptors. Promotes rearrangement of the actin cytoskeleton, cell polarization and cell migration. Promotes resolution of inflammation and wound healing. Acts via neutrophil N-formyl peptide receptors to enhance the release of CXCL2. In Rattus norvegicus (Rat), this protein is Annexin A1 (Anxa1).